The sequence spans 135 residues: Large ribosomal subunit protein uL16 (135 aa).

This sequence belongs to the universal ribosomal protein uL16 family. Part of the 50S ribosomal subunit.

Functionally, binds 23S rRNA and is also seen to make contacts with the A and possibly P site tRNAs. This chain is Large ribosomal subunit protein uL16 (rplP), found in Carsonella ruddii (strain PV).